The primary structure comprises 297 residues: Protoheme IX farnesyltransferase 1 (297 aa).

Helical transmembrane passes span 23–43 (VVVLMLITSLAGMFLATRAGV), 45–65 (WSVLLFGNLGIGLCAGGAAVV), 93–113 (LPALLFALALALLGMVLLLVF), 117–137 (LTAWLTLASLLGYAVLYTGFL), 145–165 (IVIGGLAGAAPPLLGWVAVSG), 171–191 (PLLLVLIIFAWTPPHFWALAI), 216–236 (LHILLYTLILLAVSLLPYAIH), 241–261 (LYLACALGLGLRFLHWAWVLY), and 277–297 (IGYLFALFIALLLDHYLLLSL).

The protein belongs to the UbiA prenyltransferase family. Protoheme IX farnesyltransferase subfamily.

It localises to the cell inner membrane. The enzyme catalyses heme b + (2E,6E)-farnesyl diphosphate + H2O = Fe(II)-heme o + diphosphate. It functions in the pathway porphyrin-containing compound metabolism; heme O biosynthesis; heme O from protoheme: step 1/1. In terms of biological role, converts heme B (protoheme IX) to heme O by substitution of the vinyl group on carbon 2 of heme B porphyrin ring with a hydroxyethyl farnesyl side group. This Pseudomonas putida (strain ATCC 700007 / DSM 6899 / JCM 31910 / BCRC 17059 / LMG 24140 / F1) protein is Protoheme IX farnesyltransferase 1.